A 566-amino-acid chain; its full sequence is Phosphatidylinositol 3,4,5-trisphosphate 3-phosphatase TPTE2 (566 aa).

The next 4 helical transmembrane spans lie at 135-155 (SFAF…LLLA), 173-193 (ISLA…FVEG), 208-228 (AIIV…IKFL), and 234-254 (WIHL…HLIH). The Phosphatase tensin-type domain occupies 272–448 (RRYTRDGFDL…GYFAQVKHLY (177 aa)). Residue cysteine 382 is the Phosphocysteine intermediate of the active site. Residues 455–566 (RRILFIKRFI…ILHSFRLVFT (112 aa)) enclose the C2 tensin-type domain.

It localises to the endoplasmic reticulum membrane. Its subcellular location is the golgi apparatus membrane. It carries out the reaction a 1,2-diacyl-sn-glycero-3-phospho-(1D-myo-inositol-3,4,5-trisphosphate) + H2O = a 1,2-diacyl-sn-glycero-3-phospho-(1D-myo-inositol-4,5-bisphosphate) + phosphate. Acts as a lipid phosphatase, removing the phosphate in the D3 position of the inositol ring from phosphatidylinositol 3,4,5-trisphosphate. This Macaca fascicularis (Crab-eating macaque) protein is Phosphatidylinositol 3,4,5-trisphosphate 3-phosphatase TPTE2 (TPTE2).